The sequence spans 206 residues: FMN-dependent NADH:quinone oxidoreductase (206 aa).

Residues serine 9, 15–17 (SVS), 95–98 (MYNF), and 139–142 (SRGG) contribute to the FMN site.

Belongs to the azoreductase type 1 family. Homodimer. Requires FMN as cofactor.

The enzyme catalyses 2 a quinone + NADH + H(+) = 2 a 1,4-benzosemiquinone + NAD(+). The catalysed reaction is N,N-dimethyl-1,4-phenylenediamine + anthranilate + 2 NAD(+) = 2-(4-dimethylaminophenyl)diazenylbenzoate + 2 NADH + 2 H(+). Quinone reductase that provides resistance to thiol-specific stress caused by electrophilic quinones. Its function is as follows. Also exhibits azoreductase activity. Catalyzes the reductive cleavage of the azo bond in aromatic azo compounds to the corresponding amines. The sequence is that of FMN-dependent NADH:quinone oxidoreductase from Legionella pneumophila subsp. pneumophila (strain Philadelphia 1 / ATCC 33152 / DSM 7513).